The sequence spans 119 residues: Large ribosomal subunit protein uL18 (119 aa).

Belongs to the universal ribosomal protein uL18 family. As to quaternary structure, part of the 50S ribosomal subunit; part of the 5S rRNA/L5/L18/L25 subcomplex. Contacts the 5S and 23S rRNAs.

Its function is as follows. This is one of the proteins that bind and probably mediate the attachment of the 5S RNA into the large ribosomal subunit, where it forms part of the central protuberance. This chain is Large ribosomal subunit protein uL18, found in Clostridium perfringens (strain 13 / Type A).